The chain runs to 184 residues: Nucleoporin-62 C-terminal-like protein (184 aa).

Residues 117–151 are a coiled coil; it reads RILHGEVNKVKLDQKRLEQELDFILSQQQELEFLL.

The protein belongs to the nucleoporin NSP1/NUP62 family.

The polypeptide is Nucleoporin-62 C-terminal-like protein (NUP62CL) (Homo sapiens (Human)).